Here is a 154-residue protein sequence, read N- to C-terminus: Lipoprotein signal peptidase (154 aa).

2 consecutive transmembrane segments (helical) span residues 55 to 75 (GQFWLFYLITVIVVAAIVIYI) and 85 to 105 (AGVGLGLMLGGAIGNFLDRVF). Catalysis depends on residues Asp-111 and Asp-129. A helical transmembrane segment spans residues 127–147 (VADSALTVGVILLFVHMFFFA).

Belongs to the peptidase A8 family.

It is found in the cell membrane. It carries out the reaction Release of signal peptides from bacterial membrane prolipoproteins. Hydrolyzes -Xaa-Yaa-Zaa-|-(S,diacylglyceryl)Cys-, in which Xaa is hydrophobic (preferably Leu), and Yaa (Ala or Ser) and Zaa (Gly or Ala) have small, neutral side chains.. Its pathway is protein modification; lipoprotein biosynthesis (signal peptide cleavage). Functionally, this protein specifically catalyzes the removal of signal peptides from prolipoproteins. This chain is Lipoprotein signal peptidase, found in Geobacillus kaustophilus (strain HTA426).